Consider the following 792-residue polypeptide: Ribonucleoside-diphosphate reductase large subunit (792 aa).

One can recognise an ATP-cone domain in the interval 1–92 (MHVIKRDGRQ…VSNLHKETKK (92 aa)). Residues 5-6 (KR), 11-17 (ERVMFDK), T53, and D57 each bind ATP. At K17 the chain carries N6-acetyllysine. GDP contacts are provided by S202 and S217. Residues C218 and C444 are joined by a disulfide bond. Residues 226–228 (DSI), K243, R256, and 263–264 (AG) each bind dTTP. An N6-acetyllysine modification is found at K376. N427 lines the GDP pocket. N427 serves as the catalytic Proton acceptor. C429 serves as the catalytic Cysteine radical intermediate. GDP contacts are provided by residues E431 and 604–607 (TAST). E431 acts as the Proton acceptor in catalysis. T751 carries the phosphothreonine modification.

The protein belongs to the ribonucleoside diphosphate reductase large chain family. In terms of assembly, heterodimer of a large and a small subunit. Heterodimer with small subunit RRM2 or RRM2B. The heterodimer with RRM2 has higher catalytic activity than the heterodimer with RRM2B. Interacts with AHCYL1 which inhibits its activity.

It is found in the cytoplasm. It catalyses the reaction a 2'-deoxyribonucleoside 5'-diphosphate + [thioredoxin]-disulfide + H2O = a ribonucleoside 5'-diphosphate + [thioredoxin]-dithiol. With respect to regulation, under complex allosteric control mediated by deoxynucleoside triphosphates and ATP binding to separate specificity and activation sites on the M1 subunit. The type of nucleotide bound at the specificity site determines substrate preference. It seems probable that ATP makes the enzyme reduce CDP and UDP, dGTP favors ADP reduction and dTTP favors GDP reduction. Stimulated by ATP and inhibited by dATP binding to the activity site, the dATP inhibition is mediated by AHCYL1 which stabilizes dATP in the site. In terms of biological role, provides the precursors necessary for DNA synthesis. Catalyzes the biosynthesis of deoxyribonucleotides from the corresponding ribonucleotides. The sequence is that of Ribonucleoside-diphosphate reductase large subunit (RRM1) from Homo sapiens (Human).